The following is a 44-amino-acid chain: MSYYGNYYGGLGYGYDCKYSYTSGFGAFRILDCGYRCGCGGVWI.

Belongs to the KRTAP type 20 family. As to quaternary structure, interacts with hair keratins.

Functionally, in the hair cortex, hair keratin intermediate filaments are embedded in an interfilamentous matrix, consisting of hair keratin-associated proteins (KRTAP), which are essential for the formation of a rigid and resistant hair shaft through their extensive disulfide bond cross-linking with abundant cysteine residues of hair keratins. The matrix proteins include the high-sulfur and high-glycine-tyrosine keratins. The polypeptide is Keratin-associated protein 20-3 (KRTAP20-3) (Homo sapiens (Human)).